The primary structure comprises 151 residues: Large ribosomal subunit protein bL9 (151 aa).

Belongs to the bacterial ribosomal protein bL9 family.

Functionally, binds to the 23S rRNA. This Lacticaseibacillus casei (strain BL23) (Lactobacillus casei) protein is Large ribosomal subunit protein bL9.